A 1265-amino-acid polypeptide reads, in one-letter code: Protein FAM193A (1265 aa).

The stretch at serine 107 to tyrosine 142 forms a coiled coil. The disordered stretch occupies residues alanine 247–isoleucine 272. A compositionally biased stretch (low complexity) spans serine 255–proline 271. Serine 293 bears the Phosphoserine mark. Disordered regions lie at residues asparagine 331–proline 407, glycine 553–lysine 586, valine 626–proline 674, glutamate 750–glutamate 785, leucine 822–serine 841, glutamate 859–glutamate 881, and glutamate 893–asparagine 1163. The segment covering glutamate 355–serine 365 has biased composition (acidic residues). The residue at position 383 (serine 383) is a Phosphoserine. Residue serine 642 is modified to Phosphoserine. Residues glutamine 757 to serine 769 show a composition bias toward acidic residues. A compositionally biased stretch (low complexity) spans glutamate 772 to threonine 781. Positions alanine 868–arginine 877 are enriched in basic residues. The stretch at arginine 873–alanine 932 forms a coiled coil. Composition is skewed to basic and acidic residues over residues glutamate 893 to glutamate 905 and aspartate 915 to lysine 929. Residues arginine 931–arginine 940 are compositionally biased toward basic residues. The span at arginine 953–leucine 973 shows a compositional bias: polar residues. A coiled-coil region spans residues threonine 1093 to glutamate 1118. Residues serine 1129 and serine 1144 each carry the phosphoserine modification. The segment covering glycine 1149 to glycine 1159 has biased composition (basic residues).

Belongs to the FAM193 family.

This is Protein FAM193A (FAM193A) from Homo sapiens (Human).